The chain runs to 584 residues: MDSHYGDIEGKDRAEEGLARQSLEIKVSSEPLTPANPVEQEPEPKPEPEPTQGREPESETQPVSDSSKAKDSEGIDYAHVEVPESPGAAETAGEAVSREPESLPQTQPKTKPESKEPEDKDEDEDEDEDEDEDEDEDEDEDEDEGEERDRPEKPKGKGKREKRKESRFRPSLPLTTIVEEGAAPGPQAAKEKARESLKKRDSEEIEGTDRERHKSTEEQLHPGEAKEEEKQKGASTEEFEWTADMQKLQEQQLRGELVEQYHSLLVERNRYQRYNMYLQQKIHETLRKKGLEAAAEPGDKSAEPESPEKEQAYLRYLAMLEELKKQEADDLEWYRQEVRELKQQCQEKQTRVEKEWRRFQALKKQVVMQVMGSCRTRGGRQAALREVEQLQALEDKKEKEMSAVRLENVQLKQSLVHFETRMKAQEDLAEGLLLIDFEQLKIENQTFNEKVEERNEELLKLRTKVTSNVQIITHVKEKLSFIDTENSCKKAQLSEVDAQVALGRDLLTKTKQARDSLRIDNVKLSQKCGLLGKESLLRDLEEKVEKTEMLNRRLESLKRHHAGLALSCKGVKQKIREAKTFLPS.

Basic and acidic residues-rich tracts occupy residues 1 to 18, 42 to 57, and 67 to 82; these read MDSH…EEGL, PEPK…REPE, and SKAK…HVEV. Residues 1–243 are disordered; sequence MDSHYGDIEG…ASTEEFEWTA (243 aa). Acidic residues predominate over residues 119–146; that stretch reads DKDEDEDEDEDEDEDEDEDEDEDEDEGE. Residues 189-232 are compositionally biased toward basic and acidic residues; sequence AKEKARESLKKRDSEEIEGTDRERHKSTEEQLHPGEAKEEEKQK. Coiled coils occupy residues 317–470 and 530–561; these read LAML…SNVQ and LLGK…KRHH.

It belongs to the CFAP184 family. In terms of assembly, forms a complex with CFAP263; the interaction is required for functional activity in cilia.

Its subcellular location is the cell projection. The protein resides in the cilium. The protein localises to the cytoplasm. It is found in the cytoskeleton. It localises to the microtubule organizing center. Its subcellular location is the centrosome. Its function is as follows. In complex with CFAP263, acts as a regulator of ciliary beating that connects radial spoke 3 (RS3) to the inner dynein arm (IDA) and the nexin-dynein regulatory complex (N-DRC). The complex is positioned parallel to N-DRC and forms a connection between the arch at the base of RS3, the IDA tail and N-DRC. The chain is Cilia- and flagella-associated protein 184 (Cfap184) from Mus musculus (Mouse).